An 804-amino-acid chain; its full sequence is Tubulin polyglutamylase TTLL13 (804 aa).

The tract at residues 1–41 (MEPNNCKTSESEEDDIEEEESEEECVREESTTPNSTQQALR) is disordered. Positions 4-30 (NNCKTSESEEDDIEEEESEEECVREES) form a coiled coil. The segment covering 11-26 (SEEDDIEEEESEEECV) has biased composition (acidic residues). The region spanning 85 to 430 (RRPLAINLTN…RGCDKKKVIE (346 aa)) is the TTL domain. Residues Lys-202, 208–209 (QG), 230–233 (QQYI), and 243–245 (KFD) contribute to the ATP site. An a protein-binding site is contributed by Gln-208. Residue Arg-269 participates in L-glutamate binding. 291-292 (TN) is a binding site for ATP. L-glutamate-binding residues include Tyr-293 and Lys-311. Mg(2+) contacts are provided by Asp-376, Glu-389, and Asn-391. A protein is bound at residue His-392. The c-MTBD region stretch occupies residues 401 to 482 (RLDREVKDAL…LGGYRRIYPG (82 aa)). Lys-407 provides a ligand contact to L-glutamate. Coiled coils occupy residues 504 to 541 (ASKA…KEQN) and 585 to 609 (QDIV…IRSL). A disordered region spans residues 519-556 (IRLKQEQQENPGTKKRKENKEQNQGESAGEKSRSRTAT). Basic and acidic residues predominate over residues 536–551 (ENKEQNQGESAGEKSR).

This sequence belongs to the tubulin--tyrosine ligase family. Requires Mg(2+) as cofactor. As to expression, highly expressed in heart and testis. Expressed in brain, kidney, liver, lung, muscle and trachea. In the brain, expressed in ependymal cilia, cortex, corpus callosum and striatum.

The catalysed reaction is (L-glutamyl)(n)-gamma-L-glutamyl-L-glutamyl-[protein] + L-glutamate + ATP = (L-glutamyl)(n+1)-gamma-L-glutamyl-L-glutamyl-[protein] + ADP + phosphate + H(+). Functionally, polyglutamylase which modifies tubulin, generating polyglutamate side chains of variable lengths on the gamma-carboxyl group of specific glutamate residues within the C-terminal tail of tubulin. Mediates ATP-dependent polyglutamate side-chain elongation of the polyglutamylation reaction but not the initiation step. Preferentially modifies the alpha-tubulin tail over a beta-tail. This chain is Tubulin polyglutamylase TTLL13, found in Mus musculus (Mouse).